Consider the following 469-residue polypeptide: 3-isopropylmalate dehydratase large subunit (469 aa).

[4Fe-4S] cluster contacts are provided by Cys347, Cys407, and Cys410.

Belongs to the aconitase/IPM isomerase family. LeuC type 1 subfamily. Heterodimer of LeuC and LeuD. [4Fe-4S] cluster is required as a cofactor.

It catalyses the reaction (2R,3S)-3-isopropylmalate = (2S)-2-isopropylmalate. It participates in amino-acid biosynthesis; L-leucine biosynthesis; L-leucine from 3-methyl-2-oxobutanoate: step 2/4. Catalyzes the isomerization between 2-isopropylmalate and 3-isopropylmalate, via the formation of 2-isopropylmaleate. This Prochlorococcus marinus subsp. pastoris (strain CCMP1986 / NIES-2087 / MED4) protein is 3-isopropylmalate dehydratase large subunit.